Here is a 346-residue protein sequence, read N- to C-terminus: Ribosomal RNA small subunit methyltransferase H (346 aa).

S-adenosyl-L-methionine contacts are provided by residues 46-48 (GGY), Asp-63, Phe-90, Asp-113, and Gln-120. The segment at 270–346 (GGSAGSRHMP…LPETNELARS (77 aa)) is disordered.

This sequence belongs to the methyltransferase superfamily. RsmH family.

The protein resides in the cytoplasm. The enzyme catalyses cytidine(1402) in 16S rRNA + S-adenosyl-L-methionine = N(4)-methylcytidine(1402) in 16S rRNA + S-adenosyl-L-homocysteine + H(+). Its function is as follows. Specifically methylates the N4 position of cytidine in position 1402 (C1402) of 16S rRNA. The chain is Ribosomal RNA small subunit methyltransferase H from Brucella suis (strain ATCC 23445 / NCTC 10510).